Here is a 465-residue protein sequence, read N- to C-terminus: UDP-glycosyltransferase TURAN (465 aa).

The Cytoplasmic portion of the chain corresponds to 1–75; sequence MGKRGRACVV…FIQYFPKILY (75 aa). A helical transmembrane segment spans residues 76–96; it reads PVTLLLKAFIQFTMLLWFLFV. The Lumenal segment spans residues 97–465; sequence KVPAPDIFLV…TQVVSQIADS (369 aa). Residue asparagine 238 is glycosylated (N-linked (GlcNAc...) asparagine).

The protein belongs to the glycosyltransferase group 1 family. Glycosyltransferase 33 subfamily.

The protein resides in the endoplasmic reticulum membrane. The protein operates within protein modification; protein glycosylation. In terms of biological role, required for pollen tube (PT) growth and integrity by affecting the stability of the pollen-specific ANX1 and ANX2 proteins. Involved in protein N-glycosylation in the endoplasmic reticulum (ER), especially in the female gametophyte. Mediates PT reception in synergids through protein glycosylation. In Arabidopsis thaliana (Mouse-ear cress), this protein is UDP-glycosyltransferase TURAN.